A 249-amino-acid polypeptide reads, in one-letter code: 5'-nucleotidase SurE (249 aa).

Asp9, Asp10, Ser40, and Asn92 together coordinate a divalent metal cation.

This sequence belongs to the SurE nucleotidase family. A divalent metal cation serves as cofactor.

The protein localises to the cytoplasm. The catalysed reaction is a ribonucleoside 5'-phosphate + H2O = a ribonucleoside + phosphate. In terms of biological role, nucleotidase that shows phosphatase activity on nucleoside 5'-monophosphates. In Shewanella oneidensis (strain ATCC 700550 / JCM 31522 / CIP 106686 / LMG 19005 / NCIMB 14063 / MR-1), this protein is 5'-nucleotidase SurE.